The chain runs to 247 residues: Carboxy-S-adenosyl-L-methionine synthase (247 aa).

Residues Tyr-40, 65–67 (GSS), 90–91 (DN), 122–123 (DI), Asn-137, and Arg-204 each bind S-adenosyl-L-methionine.

The protein belongs to the class I-like SAM-binding methyltransferase superfamily. Cx-SAM synthase family. As to quaternary structure, homodimer.

The catalysed reaction is prephenate + S-adenosyl-L-methionine = carboxy-S-adenosyl-L-methionine + 3-phenylpyruvate + H2O. In terms of biological role, catalyzes the conversion of S-adenosyl-L-methionine (SAM) to carboxy-S-adenosyl-L-methionine (Cx-SAM). The polypeptide is Carboxy-S-adenosyl-L-methionine synthase (Pseudomonas fluorescens (strain ATCC BAA-477 / NRRL B-23932 / Pf-5)).